The sequence spans 765 residues: Probable ATP-dependent RNA helicase DDX27 (765 aa).

Phosphoserine is present on residues serine 23, serine 25, and serine 48. The segment covering 43–63 (LGKNRSADFNPDFVFTEKEGT) has biased composition (acidic residues). Disordered stretches follow at residues 43-83 (LGKN…KRAA) and 111-179 (KEKE…FFED). The Required for interaction with the PEBOW complex signature appears at 55–57 (FVF). Residues 129–156 (ENDEEGSEDEASETDYSSADENILTKAD) are compositionally biased toward basic and acidic residues. Serine 135 and serine 146 each carry phosphoserine. Residues 157–172 (TLKVKDRKKKKKKGQE) show a composition bias toward acidic residues. The Nuclear localization signal motif lies at 164–169 (KKKKKK). The Q motif signature appears at 187–215 (LSFQDMNLSRPLLKAITAMGFKQPTPIQK). The Helicase ATP-binding domain occupies 218–392 (IPVGLLGKDI…SVSLKNPVRI (175 aa)). 231 to 238 (AATGTGKT) contacts ATP. Positions 340 to 343 (DEAD) match the DEAD box motif. One can recognise a Helicase C-terminal domain in the interval 426 to 572 (LLTRTFTDHV…DVILKFRDKI (147 aa)). The segment covering 716–725 (VFDEELTNTS) has biased composition (basic residues).

The protein belongs to the DEAD box helicase family. DDX27/DRS1 subfamily. Associates with PeBoW complex, composed of BOP1, PES1 and WDR12. Interacts directly with BOP1 and PES1.

The protein localises to the nucleus. The protein resides in the nucleolus. It is found in the chromosome. The catalysed reaction is ATP + H2O = ADP + phosphate + H(+). Functionally, probable ATP-dependent RNA helicase. Component of the nucleolar ribosomal RNA (rRNA) processing machinery that regulates 3' end formation of ribosomal 47S rRNA. This Homo sapiens (Human) protein is Probable ATP-dependent RNA helicase DDX27 (DDX27).